The chain runs to 167 residues: SsrA-binding protein (167 aa).

The segment covering 139 to 158 (QNHDKRDAAKERDWQRDKQR) has biased composition (basic and acidic residues). The interval 139–167 (QNHDKRDAAKERDWQRDKQRVMRRHNRDA) is disordered.

The protein belongs to the SmpB family.

The protein resides in the cytoplasm. Functionally, required for rescue of stalled ribosomes mediated by trans-translation. Binds to transfer-messenger RNA (tmRNA), required for stable association of tmRNA with ribosomes. tmRNA and SmpB together mimic tRNA shape, replacing the anticodon stem-loop with SmpB. tmRNA is encoded by the ssrA gene; the 2 termini fold to resemble tRNA(Ala) and it encodes a 'tag peptide', a short internal open reading frame. During trans-translation Ala-aminoacylated tmRNA acts like a tRNA, entering the A-site of stalled ribosomes, displacing the stalled mRNA. The ribosome then switches to translate the ORF on the tmRNA; the nascent peptide is terminated with the 'tag peptide' encoded by the tmRNA and targeted for degradation. The ribosome is freed to recommence translation, which seems to be the essential function of trans-translation. In Xanthomonas oryzae pv. oryzae (strain MAFF 311018), this protein is SsrA-binding protein.